The following is a 225-amino-acid chain: Heptaprenylglyceryl phosphate synthase (225 aa).

Lysine 6 contacts sn-glycerol 1-phosphate. Residues aspartate 8 and threonine 34 each contribute to the Mg(2+) site. Sn-glycerol 1-phosphate is bound by residues 153–158 (YVEYSG), glycine 183, and 203–204 (GN).

Belongs to the GGGP/HepGP synthase family. Group I subfamily. Homodimer. Mg(2+) serves as cofactor.

The catalysed reaction is sn-glycerol 1-phosphate + all-trans-heptaprenyl diphosphate = 3-heptaprenyl-sn-glycero-1-phosphate + diphosphate. It functions in the pathway membrane lipid metabolism; glycerophospholipid metabolism. Prenyltransferase that catalyzes in vivo the transfer of the heptaprenyl moiety of heptaprenyl pyrophosphate (HepPP; 35 carbon atoms) to the C3 hydroxyl of sn-glycerol-1-phosphate (G1P), producing heptaprenylglyceryl phosphate (HepGP). This reaction is an ether-bond-formation step in the biosynthesis of archaea-type G1P-based membrane lipids found in Bacillales. To a much lesser extent, is also able to use geranylgeranyl diphosphate (GGPP; C20) as the prenyl donor. The polypeptide is Heptaprenylglyceryl phosphate synthase (Listeria monocytogenes serovar 1/2a (strain ATCC BAA-679 / EGD-e)).